We begin with the raw amino-acid sequence, 245 residues long: Phosducin (245 aa).

Residues 1-67 (MEEARRQSLE…SRDDKDSKER (67 aa)) are disordered. The Phosducin domain occupies 1–241 (MEEARRQSLE…IHALEQTSME (241 aa)). Positions 58–67 (SRDDKDSKER) are enriched in basic and acidic residues. Serine 73 is modified (phosphoserine; by PKA). The segment at 111–245 (YGFVYELETG…EQTSMEEDVE (135 aa)) is thioredoxin fold.

This sequence belongs to the phosducin family. As to quaternary structure, forms a complex with the beta and gamma subunits of the GTP-binding protein, transducin. Interacts with CRX. In terms of processing, light-induced changes in cyclic nucleotide levels modulate the phosphorylation of this protein by cAMP kinase.

The protein resides in the cytoplasm. It localises to the cytosol. Its subcellular location is the nucleus. It is found in the cell projection. The protein localises to the cilium. The protein resides in the photoreceptor outer segment. It localises to the photoreceptor inner segment. Functionally, may participate in the regulation of visual phototransduction or in the integration of photoreceptor metabolism. Inhibits the transcriptional activation activity of the cone-rod homeobox CRX. In Equus caballus (Horse), this protein is Phosducin (PDC).